We begin with the raw amino-acid sequence, 346 residues long: Phosphoribosylformylglycinamidine cyclo-ligase (346 aa).

It belongs to the AIR synthase family.

Its subcellular location is the cytoplasm. It catalyses the reaction 2-formamido-N(1)-(5-O-phospho-beta-D-ribosyl)acetamidine + ATP = 5-amino-1-(5-phospho-beta-D-ribosyl)imidazole + ADP + phosphate + H(+). It participates in purine metabolism; IMP biosynthesis via de novo pathway; 5-amino-1-(5-phospho-D-ribosyl)imidazole from N(2)-formyl-N(1)-(5-phospho-D-ribosyl)glycinamide: step 2/2. This chain is Phosphoribosylformylglycinamidine cyclo-ligase, found in Methylobacillus flagellatus (strain ATCC 51484 / DSM 6875 / VKM B-1610 / KT).